Consider the following 65-residue polypeptide: Large ribosomal subunit protein bL32 (65 aa).

Belongs to the bacterial ribosomal protein bL32 family.

The chain is Large ribosomal subunit protein bL32 from Tropheryma whipplei (strain TW08/27) (Whipple's bacillus).